A 492-amino-acid chain; its full sequence is Cytochrome P450 2L1 (492 aa).

A heme-binding site is contributed by Cys-436.

It belongs to the cytochrome P450 family. The cofactor is heme.

The protein localises to the endoplasmic reticulum membrane. Its subcellular location is the microsome membrane. The enzyme catalyses an organic molecule + reduced [NADPH--hemoprotein reductase] + O2 = an alcohol + oxidized [NADPH--hemoprotein reductase] + H2O + H(+). Its function is as follows. Efficient in catalyzing the monooxygenation of benzphetamine, aminopyrine, benzo(a)pyrene, progesterone, and testosterone. The polypeptide is Cytochrome P450 2L1 (CYP2L1) (Panulirus argus (Caribbean spiny lobster)).